We begin with the raw amino-acid sequence, 365 residues long: Aminomethyltransferase (365 aa).

The protein belongs to the GcvT family. The glycine cleavage system is composed of four proteins: P, T, L and H.

The catalysed reaction is N(6)-[(R)-S(8)-aminomethyldihydrolipoyl]-L-lysyl-[protein] + (6S)-5,6,7,8-tetrahydrofolate = N(6)-[(R)-dihydrolipoyl]-L-lysyl-[protein] + (6R)-5,10-methylene-5,6,7,8-tetrahydrofolate + NH4(+). Functionally, the glycine cleavage system catalyzes the degradation of glycine. The protein is Aminomethyltransferase of Bacillus pumilus (strain SAFR-032).